The sequence spans 121 residues: Large ribosomal subunit protein uL14 (121 aa).

It belongs to the universal ribosomal protein uL14 family. As to quaternary structure, part of the 50S ribosomal subunit. Forms a cluster with proteins L3 and L19. In the 70S ribosome, L14 and L19 interact and together make contacts with the 16S rRNA in bridges B5 and B8.

Its function is as follows. Binds to 23S rRNA. Forms part of two intersubunit bridges in the 70S ribosome. This Synechococcus sp. (strain WH7803) protein is Large ribosomal subunit protein uL14.